The sequence spans 357 residues: UDP-N-acetylglucosamine--N-acetylmuramyl-(pentapeptide) pyrophosphoryl-undecaprenol N-acetylglucosamine transferase (357 aa).

UDP-N-acetyl-alpha-D-glucosamine is bound by residues 15–17, Asn-124, Arg-165, Ser-194, and Gln-288; that span reads TGG.

Belongs to the glycosyltransferase 28 family. MurG subfamily.

It localises to the cell inner membrane. The enzyme catalyses di-trans,octa-cis-undecaprenyl diphospho-N-acetyl-alpha-D-muramoyl-L-alanyl-D-glutamyl-meso-2,6-diaminopimeloyl-D-alanyl-D-alanine + UDP-N-acetyl-alpha-D-glucosamine = di-trans,octa-cis-undecaprenyl diphospho-[N-acetyl-alpha-D-glucosaminyl-(1-&gt;4)]-N-acetyl-alpha-D-muramoyl-L-alanyl-D-glutamyl-meso-2,6-diaminopimeloyl-D-alanyl-D-alanine + UDP + H(+). It participates in cell wall biogenesis; peptidoglycan biosynthesis. Cell wall formation. Catalyzes the transfer of a GlcNAc subunit on undecaprenyl-pyrophosphoryl-MurNAc-pentapeptide (lipid intermediate I) to form undecaprenyl-pyrophosphoryl-MurNAc-(pentapeptide)GlcNAc (lipid intermediate II). This is UDP-N-acetylglucosamine--N-acetylmuramyl-(pentapeptide) pyrophosphoryl-undecaprenol N-acetylglucosamine transferase from Nostoc punctiforme (strain ATCC 29133 / PCC 73102).